A 183-amino-acid chain; its full sequence is Protein jagunal homolog 1 (183 aa).

Residues 1–39 (MASRAGPRAAGTDGSDFQHRERVAMHYQMSVTLKYEIKK) lie on the Cytoplasmic side of the membrane. Ser-3 is modified (phosphoserine). The helical transmembrane segment at 40-60 (LIYVHLVIWLLLVAKMSVGHL) threads the bilayer. Over 61-71 (RLLSHDQVAMP) the chain is Lumenal. The chain crosses the membrane as a helical span at residues 72-92 (YQWEYPYLLSILPSLLGLLSF). At 93 to 96 (PRNN) the chain is on the cytoplasmic side. Residues 97–117 (ISYLVLSMISMGLFSIAPLIY) form a helical membrane-spanning segment. Residues 118 to 137 (GSMEMFPAAQQLYRHGKAYR) lie on the Lumenal side of the membrane. A helical transmembrane segment spans residues 138–158 (FLFGFSAVSIMYLVLVLAVQV). Topologically, residues 159-183 (HAWQLYYSKKLLDSWFTSTQEKKHK) are cytoplasmic.

It belongs to the jagunal family. As to quaternary structure, interacts with COPA, COPB2 and COPG2. As to expression, ubiquitously expressed.

Its subcellular location is the endoplasmic reticulum membrane. Functionally, endoplasmic reticulum transmembrane protein involved in vesicle-mediated transport, which is required for neutrophil function. Required for vesicle-mediated transport; it is however unclear whether it is involved in early secretory pathway or intracellular protein transport. Acts as a regulator of neutrophil function, probably via its role in vesicle-mediated transport: required for defense against fungal pathogens and for granulocyte colony-stimulating factor (GM-CSF) signaling pathway; possibly by regulating glycosylation and/or targeting of proteins contributing to the viability and migration of neutrophils. This chain is Protein jagunal homolog 1, found in Homo sapiens (Human).